A 1845-amino-acid polypeptide reads, in one-letter code: Helicase swr-1 (1845 aa).

Residues 1 to 13 are compositionally biased toward polar residues; that stretch reads MTTMMTDSGTASD. The segment at 1 to 329 is disordered; the sequence is MTTMMTDSGT…GASRATPRIK (329 aa). Positions 24–38 are enriched in low complexity; that stretch reads NDTTTTTTTTTTPGD. Positions 63-84 are enriched in polar residues; that stretch reads SKSYSSTHHVPAIDNTSTTNAN. Residues 98–108 show a composition bias toward low complexity; that stretch reads SPLSSISSPLS. The span at 168-180 shows a compositional bias: basic and acidic residues; sequence PKPESPPWKKFEA. The segment covering 216-243 has biased composition (polar residues); that stretch reads AIQTSPVSNKSSASTSRKPAPASSSNSK. Composition is skewed to pro residues over residues 248 to 258 and 283 to 292; these read KMPPPPPPPKA and PRRPATPPKP. The HSA domain occupies 418-493; sequence PEAEEEPPRQ…EMEASKAKWR (76 aa). Disordered stretches follow at residues 539–713 and 749–935; these read QKLQ…LFFG and ELQV…TVKT. Acidic residues predominate over residues 549–565; it reads DGDEITDEDEDEDDEDL. Residues 574–585 show a composition bias toward basic and acidic residues; it reads GDEKESDEHSDQ. 2 stretches are compositionally biased toward acidic residues: residues 586-608 and 663-704; these read GSDE…SSED and NDDD…DDEP. Composition is skewed to polar residues over residues 762 to 777 and 815 to 834; these read TNGT…SQTE and TNDS…NQTL. Residues 888–897 show a composition bias toward low complexity; it reads SQSQTQSPKT. The segment covering 898–909 has biased composition (basic and acidic residues); the sequence is TDTKPTDVDTPH. Residues 922–933 show a composition bias toward polar residues; that stretch reads RQSSPQPTTPTV. Residues 957-1122 form the Helicase ATP-binding domain; sequence AGLYANNTNG…WSLLYFLAPP (166 aa). 970 to 977 serves as a coordination point for ATP; sequence DEMGLGKT. The DEAH box motif lies at 1073–1076; that stretch reads DEAH. One can recognise a Helicase C-terminal domain in the interval 1510–1660; the sequence is ALDKLLRKLQ…DVVIQEGEFT (151 aa). Disordered stretches follow at residues 1702 to 1724, 1751 to 1783, and 1816 to 1845; these read TTGA…PPVR, QDEA…GGEE, and LEGT…SRKR. The span at 1704–1718 shows a compositional bias: gly residues; it reads GAGGYDGTADGGGGA. The segment covering 1769–1781 has biased composition (low complexity); it reads DGLADLDGQLLGG. Basic residues predominate over residues 1826 to 1845; the sequence is DRKKGRDRNRNRKGKDSRKR.

Belongs to the SNF2/RAD54 helicase family. SWR1 subfamily. Component of the SWR1 chromatin-remodeling complex.

It is found in the nucleus. The enzyme catalyses ATP + H2O = ADP + phosphate + H(+). Functionally, catalytic component of the SWR1 complex which mediates the ATP-dependent exchange of histone H2A for the H2A variant H2A.Z leading to transcriptional regulation of selected genes by chromatin remodeling. The polypeptide is Helicase swr-1 (crf1-1) (Neurospora crassa (strain ATCC 24698 / 74-OR23-1A / CBS 708.71 / DSM 1257 / FGSC 987)).